The sequence spans 395 residues: Multidrug resistance protein MdtL (395 aa).

12 consecutive transmembrane segments (helical) span residues 4 to 24 (FLLC…MYLV), 42 to 62 (IAFS…GKIA), 69 to 89 (PVAI…SRAS), 93 to 113 (LFLS…VVAF), 131 to 151 (LLNG…HLIM), 158 to 178 (SLFY…LFIL), 217 to 237 (VSVI…VMGF), 247 to 267 (ALTA…LGLF), 271 to 291 (TLML…SLAH), 295 to 315 (VTLF…GVAM), 328 to 350 (VASS…LAAI), and 355 to 377 (AMNM…IFSV).

Belongs to the major facilitator superfamily. DHA1 family. MdtL (TC 2.A.1.2.22) subfamily.

Its subcellular location is the cell inner membrane. In Salmonella dublin (strain CT_02021853), this protein is Multidrug resistance protein MdtL.